We begin with the raw amino-acid sequence, 367 residues long: DNA replication and repair protein RecF (367 aa).

Glycine 30–threonine 37 is a binding site for ATP.

This sequence belongs to the RecF family.

The protein resides in the cytoplasm. Its function is as follows. The RecF protein is involved in DNA metabolism; it is required for DNA replication and normal SOS inducibility. RecF binds preferentially to single-stranded, linear DNA. It also seems to bind ATP. The polypeptide is DNA replication and repair protein RecF (Pseudomonas putida (strain W619)).